We begin with the raw amino-acid sequence, 279 residues long: Histone chaperone ASF1 (279 aa).

Residues 1-143 (MSIVSLLGIK…HIVRNILAEK (143 aa)) form an interaction with HIR1 region. Residues 1–155 (MSIVSLLGIK…VTRFNIVWDN (155 aa)) form an interaction with histone H3, histone H4, RAD53 and the RF-C complex region. Positions 156–279 (ENEGDLYPPE…TPKDAARSTN (124 aa)) are disordered. Residues 168 to 244 (GVDDEEEEDD…DEEEGEEEVG (77 aa)) show a composition bias toward acidic residues. The stretch at 192–243 (DDQEDGEGEAEEAAEEEEEEEEKTEDNETNLEEEEEDIENSDGDEEEGEEEV) forms a coiled coil. 2 stretches are compositionally biased toward basic and acidic residues: residues 245-254 (SVDKNEDGND) and 269-279 (STPKDAARSTN).

The protein belongs to the ASF1 family. In terms of assembly, interacts with histone H3/H4 heterodimers via both histone H3 and histone H4. Binds with higher affinity to H3/H4 heterodimers where histone H3 has been pre-acetylated on 'Lys-14'. Interacts with RAD53 and this may impair interaction with histones and chromatin assembly; the interaction is reduced upon activation of DNA damage or replication checkpoints which in turn promotes histone binding and chromatin assembly. Interacts with the CAC2 subunit of chromatin assembly factor 1 (CAF-1). Interacts with the HIR1, HIR2, HIR3 and HPC2 subunits of the HIR complex. Interacts with the RFC1, RFC2, RFC3, RFC4 and RFC5 subunits of the replication factor C (RF-C/RFC) complex; which may recruit this protein to DNA. Interacts with the SAS2, SAS4 and SAS5 subunits of the SAS/SAS-I complex. Interacts with the BDF1, BDF2, SPT15, TAF1 and TAF7 subunits of the TFIID complex. Interacts with RTT109 and VPS75; the interaction with RTT109 is direct.

It localises to the nucleus. In terms of biological role, histone chaperone that facilitates histone deposition and histone exchange and removal during nucleosome assembly and disassembly. Facilitates histone deposition through both replication-dependent and replication-independent chromatin assembly pathways. Cooperates with chromatin assembly factor 1 (CAF-1) to promote replication-dependent chromatin assembly and with the HIR complex to promote replication-independent chromatin assembly, which may occur during transcription and DNA repair. May be required for the maintenance of a subset of replication elongation factors, including DNA polymerase epsilon, the RFC complex and PCNA, at stalled replication forks. Also required for RTT109-dependent acetylation of histone H3 on 'Lys-9' and 'Lys-56'. Promotion of RTT109-mediated histone H3 'Lys-56' acetylation is dependent on interactions with histone H3 pre-acetylated on 'Lys-14'. In Saccharomyces cerevisiae (strain ATCC 204508 / S288c) (Baker's yeast), this protein is Histone chaperone ASF1.